The following is a 173-amino-acid chain: Photosystem I assembly protein Ycf3 (173 aa).

TPR repeat units follow at residues 35–68 (AYIY…EENK), 72–105 (GETL…NPKQ), and 120–153 (GRNA…YPGG).

It belongs to the Ycf3 family.

It localises to the cellular thylakoid membrane. In terms of biological role, essential for the assembly of the photosystem I (PSI) complex. May act as a chaperone-like factor to guide the assembly of the PSI subunits. This is Photosystem I assembly protein Ycf3 from Prochlorococcus marinus (strain MIT 9301).